The sequence spans 1040 residues: Multidrug resistance protein MdtB (1040 aa).

12 helical membrane-spanning segments follow: residues F16–I36, L347–A367, I369–L389, L396–I416, I440–F460, F472–P492, W537–I557, L863–I883, F888–A908, I911–V931, I968–V988, and I998–I1018.

It belongs to the resistance-nodulation-cell division (RND) (TC 2.A.6) family. MdtB subfamily. In terms of assembly, part of a tripartite efflux system composed of MdtA, MdtB and MdtC. MdtB forms a heteromultimer with MdtC.

It is found in the cell inner membrane. In terms of biological role, the MdtABC tripartite complex confers resistance against novobiocin and deoxycholate. This is Multidrug resistance protein MdtB from Escherichia coli O81 (strain ED1a).